The following is a 226-amino-acid chain: Uracil-DNA glycosylase (226 aa).

Asp-64 functions as the Proton acceptor in the catalytic mechanism.

Belongs to the uracil-DNA glycosylase (UDG) superfamily. UNG family.

It is found in the cytoplasm. The enzyme catalyses Hydrolyzes single-stranded DNA or mismatched double-stranded DNA and polynucleotides, releasing free uracil.. Functionally, excises uracil residues from the DNA which can arise as a result of misincorporation of dUMP residues by DNA polymerase or due to deamination of cytosine. This Vibrio parahaemolyticus serotype O3:K6 (strain RIMD 2210633) protein is Uracil-DNA glycosylase.